A 184-amino-acid chain; its full sequence is Photosystem I assembly protein Ycf4 (184 aa).

A run of 2 helical transmembrane segments spans residues N21–Y43 and G63–S85.

It belongs to the Ycf4 family.

The protein localises to the plastid. It localises to the chloroplast thylakoid membrane. Its function is as follows. Seems to be required for the assembly of the photosystem I complex. This chain is Photosystem I assembly protein Ycf4, found in Spinacia oleracea (Spinach).